Consider the following 89-residue polypeptide: MSRSLRKGPYINVKLEKKILLMNESKKKSVVKTWARASMISPDFVGCTIAVHNGNKFIPVYITENMVGHKLGEFSPTRQFRGHAGNKKK.

The protein belongs to the universal ribosomal protein uS19 family.

Its function is as follows. Protein S19 forms a complex with S13 that binds strongly to the 16S ribosomal RNA. In Azobacteroides pseudotrichonymphae genomovar. CFP2, this protein is Small ribosomal subunit protein uS19.